A 100-amino-acid polypeptide reads, in one-letter code: MIREERLLKVLRSPHVSEKASAAMEKNNTIVLKVAKDATKAEIKAAVQKLFEVEVEDVNTLLVKGKSKRHGQRVGRRSDWKKAYVTLKEGQNLDFIGGAE.

The protein belongs to the universal ribosomal protein uL23 family. As to quaternary structure, part of the 50S ribosomal subunit. Contacts protein L29, and trigger factor when it is bound to the ribosome.

One of the early assembly proteins it binds 23S rRNA. One of the proteins that surrounds the polypeptide exit tunnel on the outside of the ribosome. Forms the main docking site for trigger factor binding to the ribosome. This Yersinia pestis bv. Antiqua (strain Antiqua) protein is Large ribosomal subunit protein uL23.